The chain runs to 325 residues: mRNA decay factor CTH1 (325 aa).

2 consecutive C3H1-type zinc fingers follow at residues Leu204–Asn232 and Asn242–Asp270. The segment at Ser284–Asn306 is disordered. Polar residues predominate over residues Leu292 to Asn306.

Functionally, binds to specific AU-rich elements (ARE) in the 3'-untranslated region of target mRNAs and promotes their degradation. In response to iron deficiency, promotes the decay of many mRNAs encoding proteins involved in iron-dependent pathways. Negatively regulates primarily iron-dependent mitochondrial processes including respiration and amino acid biosynthesis. The polypeptide is mRNA decay factor CTH1 (CTH1) (Saccharomyces cerevisiae (strain ATCC 204508 / S288c) (Baker's yeast)).